The sequence spans 310 residues: Probable deoxyhypusine synthase (310 aa).

The Nucleophile role is filled by lysine 280.

This sequence belongs to the deoxyhypusine synthase family. Requires NAD(+) as cofactor.

The enzyme catalyses [eIF5A protein]-L-lysine + spermidine = [eIF5A protein]-deoxyhypusine + propane-1,3-diamine. The protein operates within protein modification; eIF5A hypusination. Catalyzes the NAD-dependent oxidative cleavage of spermidine and the subsequent transfer of the butylamine moiety of spermidine to the epsilon-amino group of a specific lysine residue of the eIF-5A precursor protein to form the intermediate deoxyhypusine residue. The protein is Probable deoxyhypusine synthase (dys) of Aeropyrum pernix (strain ATCC 700893 / DSM 11879 / JCM 9820 / NBRC 100138 / K1).